Here is a 1141-residue protein sequence, read N- to C-terminus: Eukaryotic translation initiation factor 3 subunit A (1141 aa).

A PCI domain is found at 319–501 (LQRMAAHVLL…NSIYFGTDLT (183 aa)). 2 stretches are compositionally biased toward basic and acidic residues: residues 588–623 (QNNAREEEEARRQEEESRKAKLAEQKRLEQEQEERE) and 829–899 (AAEE…RGGD). 2 disordered regions span residues 588–631 (QNNA…QNEI) and 829–1141 (AAEE…VKRR). Ser-908 is subject to Phosphoserine. Composition is skewed to basic and acidic residues over residues 920-976 (ERND…EPDT), 990-1051 (SRDD…EPQR), 1059-1087 (DAPRHADRENRRPAGERRDRDVRETRGDQ), and 1110-1131 (TREEKPAAKRDQAQEKENKAGD).

This sequence belongs to the eIF-3 subunit A family. Component of the eukaryotic translation initiation factor 3 (eIF-3) complex. The eIF-3 complex interacts with pix.

It is found in the cytoplasm. Its function is as follows. RNA-binding component of the eukaryotic translation initiation factor 3 (eIF-3) complex, which is involved in protein synthesis of a specialized repertoire of mRNAs and, together with other initiation factors, stimulates binding of mRNA and methionyl-tRNAi to the 40S ribosome. The eIF-3 complex specifically targets and initiates translation of a subset of mRNAs involved in cell proliferation. This Drosophila sechellia (Fruit fly) protein is Eukaryotic translation initiation factor 3 subunit A.